Here is a 309-residue protein sequence, read N- to C-terminus: Protein FdhE homolog (309 aa).

This sequence belongs to the FdhE family.

Its subcellular location is the cytoplasm. Functionally, necessary for formate dehydrogenase activity. The chain is Protein FdhE homolog from Cronobacter sakazakii (strain ATCC BAA-894) (Enterobacter sakazakii).